The primary structure comprises 286 residues: Phosphatidylserine decarboxylase proenzyme (286 aa).

Active-site charge relay system; for autoendoproteolytic cleavage activity residues include Asp-90, His-147, and Ser-252. Catalysis depends on Ser-252, which acts as the Schiff-base intermediate with substrate; via pyruvic acid; for decarboxylase activity. Ser-252 is modified (pyruvic acid (Ser); by autocatalysis).

This sequence belongs to the phosphatidylserine decarboxylase family. PSD-B subfamily. Prokaryotic type I sub-subfamily. Heterodimer of a large membrane-associated beta subunit and a small pyruvoyl-containing alpha subunit. The cofactor is pyruvate. Post-translationally, is synthesized initially as an inactive proenzyme. Formation of the active enzyme involves a self-maturation process in which the active site pyruvoyl group is generated from an internal serine residue via an autocatalytic post-translational modification. Two non-identical subunits are generated from the proenzyme in this reaction, and the pyruvate is formed at the N-terminus of the alpha chain, which is derived from the carboxyl end of the proenzyme. The autoendoproteolytic cleavage occurs by a canonical serine protease mechanism, in which the side chain hydroxyl group of the serine supplies its oxygen atom to form the C-terminus of the beta chain, while the remainder of the serine residue undergoes an oxidative deamination to produce ammonia and the pyruvoyl prosthetic group on the alpha chain. During this reaction, the Ser that is part of the protease active site of the proenzyme becomes the pyruvoyl prosthetic group, which constitutes an essential element of the active site of the mature decarboxylase.

Its subcellular location is the cell membrane. It catalyses the reaction a 1,2-diacyl-sn-glycero-3-phospho-L-serine + H(+) = a 1,2-diacyl-sn-glycero-3-phosphoethanolamine + CO2. Its pathway is phospholipid metabolism; phosphatidylethanolamine biosynthesis; phosphatidylethanolamine from CDP-diacylglycerol: step 2/2. Its function is as follows. Catalyzes the formation of phosphatidylethanolamine (PtdEtn) from phosphatidylserine (PtdSer). The sequence is that of Phosphatidylserine decarboxylase proenzyme from Pseudomonas fluorescens (strain Pf0-1).